The primary structure comprises 359 residues: Guanine nucleotide-binding protein subunit alpha-11 (359 aa).

S-palmitoyl cysteine attachment occurs at residues Cys9 and Cys10. The 322-residue stretch at 38–359 (RELKLLLLGT…QLNLKEYNLV (322 aa)) folds into the G-alpha domain. The segment at 41 to 54 (KLLLLGTGESGKST) is G1 motif. Residues 46 to 53 (GTGESGKS) and 180 to 183 (LRVR) each bind GTP. Ser53 serves as a coordination point for Mg(2+). Positions 178-186 (DVLRVRVPT) are G2 motif. A Mg(2+)-binding site is contributed by Thr186. The interval 201 to 210 (FRMVDVGGQR) is G3 motif. The segment at 270–277 (ILFLNKKD) is G4 motif. GTP is bound by residues 274 to 277 (NKKD) and Ala331. Positions 329–334 (TCATDT) are G5 motif.

The protein belongs to the G-alpha family. G(q) subfamily. As to quaternary structure, g proteins are composed of 3 units; alpha, beta and gamma. The alpha chain contains the guanine nucleotide binding site. Interacts with RGS22. Interacts with NTSR1.

The protein resides in the cell membrane. It is found in the cytoplasm. It catalyses the reaction GTP + H2O = GDP + phosphate + H(+). In terms of biological role, guanine nucleotide-binding proteins (G proteins) function as transducers downstream of G protein-coupled receptors (GPCRs) in numerous signaling cascades. The alpha chain contains the guanine nucleotide binding site and alternates between an active, GTP-bound state and an inactive, GDP-bound state. Signaling by an activated GPCR promotes GDP release and GTP binding. The alpha subunit has a low GTPase activity that converts bound GTP to GDP, thereby terminating the signal. Both GDP release and GTP hydrolysis are modulated by numerous regulatory proteins. Signaling is mediated via phospholipase C-beta-dependent inositol lipid hydrolysis for signal propagation: activates phospholipase C-beta: following GPCR activation, GNA11 activates PLC-beta (PLCB1, PLCB2, PLCB3 or PLCB4), leading to production of diacylglycerol (DAG) and inositol 1,4,5-trisphosphate (IP3). Transduces FFAR4 signaling in response to long-chain fatty acids (LCFAs). Together with GNAQ, required for heart development. In the respiratory epithelium, transmits OXGR1-dependent signals that lead to downstream intracellular Ca(2+) release and mucocilliary clearance of airborne pathogens. The protein is Guanine nucleotide-binding protein subunit alpha-11 (Gna11) of Mus musculus (Mouse).